The sequence spans 169 residues: ATP synthase subunit b (169 aa).

Residues 11–31 (IPSFIAQVVNFGLLLGLLYLF) traverse the membrane as a helical segment.

This sequence belongs to the ATPase B chain family. F-type ATPases have 2 components, F(1) - the catalytic core - and F(0) - the membrane proton channel. F(1) has five subunits: alpha(3), beta(3), gamma(1), delta(1), epsilon(1). F(0) has three main subunits: a(1), b(2) and c(10-14). The alpha and beta chains form an alternating ring which encloses part of the gamma chain. F(1) is attached to F(0) by a central stalk formed by the gamma and epsilon chains, while a peripheral stalk is formed by the delta and b chains.

It localises to the cell membrane. F(1)F(0) ATP synthase produces ATP from ADP in the presence of a proton or sodium gradient. F-type ATPases consist of two structural domains, F(1) containing the extramembraneous catalytic core and F(0) containing the membrane proton channel, linked together by a central stalk and a peripheral stalk. During catalysis, ATP synthesis in the catalytic domain of F(1) is coupled via a rotary mechanism of the central stalk subunits to proton translocation. Its function is as follows. Component of the F(0) channel, it forms part of the peripheral stalk, linking F(1) to F(0). The polypeptide is ATP synthase subunit b (Dehalococcoides mccartyi (strain ATCC BAA-2266 / KCTC 15142 / 195) (Dehalococcoides ethenogenes (strain 195))).